Reading from the N-terminus, the 939-residue chain is Valine--tRNA ligase (939 aa).

The short motif at 45 to 55 (PNVTGTLHMGH) is the 'HIGH' region element. Residues 549 to 553 (KMSKS) carry the 'KMSKS' region motif. Lys-552 contributes to the ATP binding site. Residues 876 to 939 (AAETARLRKE…KIRVQLVKLA (64 aa)) are a coiled coil.

It belongs to the class-I aminoacyl-tRNA synthetase family. ValS type 1 subfamily. Monomer.

Its subcellular location is the cytoplasm. The enzyme catalyses tRNA(Val) + L-valine + ATP = L-valyl-tRNA(Val) + AMP + diphosphate. Catalyzes the attachment of valine to tRNA(Val). As ValRS can inadvertently accommodate and process structurally similar amino acids such as threonine, to avoid such errors, it has a 'posttransfer' editing activity that hydrolyzes mischarged Thr-tRNA(Val) in a tRNA-dependent manner. This is Valine--tRNA ligase from Chromobacterium violaceum (strain ATCC 12472 / DSM 30191 / JCM 1249 / CCUG 213 / NBRC 12614 / NCIMB 9131 / NCTC 9757 / MK).